The primary structure comprises 101 residues: Small ribosomal subunit protein uS14m (101 aa).

Belongs to the universal ribosomal protein uS14 family. Component of the mitochondrial ribosome small subunit (28S) which comprises a 12S rRNA and about 30 distinct proteins. Interacts with LIAT1.

The protein resides in the mitochondrion. In Dictyostelium discoideum (Social amoeba), this protein is Small ribosomal subunit protein uS14m (mrps14).